The following is a 362-amino-acid chain: Endopolygalacturonase II (362 aa).

The signal sequence occupies residues 1 to 21 (MHSFASLLAYGLVAGATFASA). Residues 22–27 (SPIEAR) constitute a propeptide that is removed on maturation. C30 and C45 are joined by a disulfide. One copy of the PbH1 1 repeat lies at 156–186 (ANDITFTDVTINNADGDTQGGHNTDAFDVGN). D201 (proton donor) is an active-site residue. A disulfide bridge links C203 with C219. 4 PbH1 repeats span residues 209–229 (GENI…SIGS), 238–259 (VKNV…RIKT), 267–289 (VSEI…VIQQ), and 301–322 (TNGV…DSGA). H223 is a catalytic residue. Residue N240 is glycosylated (N-linked (GlcNAc...) (high mannose) asparagine). Cystine bridges form between C329/C334 and C353/C362.

It belongs to the glycosyl hydrolase 28 family.

The protein localises to the secreted. It catalyses the reaction (1,4-alpha-D-galacturonosyl)n+m + H2O = (1,4-alpha-D-galacturonosyl)n + (1,4-alpha-D-galacturonosyl)m.. Functionally, involved in maceration and soft-rotting of plant tissue. Hydrolyzes the 1,4-alpha glycosidic bonds of de-esterified pectate in the smooth region of the plant cell wall. The chain is Endopolygalacturonase II (pgaII) from Aspergillus niger (strain ATCC 1015 / CBS 113.46 / FGSC A1144 / LSHB Ac4 / NCTC 3858a / NRRL 328 / USDA 3528.7).